The following is an 81-amino-acid chain: Gamma-conotoxin-like TeA53 (81 aa).

The signal sequence occupies residues 1-19 (MQKLTILLLVAAVLMSTQA). A propeptide spanning residues 20–42 (LNQEQHQRAKINLLSKRKPPAER) is cleaved from the precursor. 3 disulfide bridges follow: Cys49-Cys63, Cys56-Cys67, and Cys62-Cys72.

The protein belongs to the conotoxin O2 superfamily. As to expression, expressed by the venom duct.

Its subcellular location is the secreted. In terms of biological role, gamma-conotoxins may act on voltage-gated non-specific cation pacemaker channels (HCN). This Conus textile (Cloth-of-gold cone) protein is Gamma-conotoxin-like TeA53.